The sequence spans 319 residues: Acetyl-coenzyme A carboxylase carboxyl transferase subunit alpha (319 aa).

The region spanning 38–293 (HALQDKLRLR…KAVLLNELDA (256 aa)) is the CoA carboxyltransferase C-terminal domain.

The protein belongs to the AccA family. Acetyl-CoA carboxylase is a heterohexamer composed of biotin carboxyl carrier protein (AccB), biotin carboxylase (AccC) and two subunits each of ACCase subunit alpha (AccA) and ACCase subunit beta (AccD).

It localises to the cytoplasm. The catalysed reaction is N(6)-carboxybiotinyl-L-lysyl-[protein] + acetyl-CoA = N(6)-biotinyl-L-lysyl-[protein] + malonyl-CoA. Its pathway is lipid metabolism; malonyl-CoA biosynthesis; malonyl-CoA from acetyl-CoA: step 1/1. Its function is as follows. Component of the acetyl coenzyme A carboxylase (ACC) complex. First, biotin carboxylase catalyzes the carboxylation of biotin on its carrier protein (BCCP) and then the CO(2) group is transferred by the carboxyltransferase to acetyl-CoA to form malonyl-CoA. This is Acetyl-coenzyme A carboxylase carboxyl transferase subunit alpha from Stenotrophomonas maltophilia (strain R551-3).